A 393-amino-acid chain; its full sequence is NAD(P)H-quinone oxidoreductase subunit H, chloroplastic (393 aa).

Belongs to the complex I 49 kDa subunit family. As to quaternary structure, NDH is composed of at least 16 different subunits, 5 of which are encoded in the nucleus.

It localises to the plastid. The protein localises to the chloroplast thylakoid membrane. The enzyme catalyses a plastoquinone + NADH + (n+1) H(+)(in) = a plastoquinol + NAD(+) + n H(+)(out). The catalysed reaction is a plastoquinone + NADPH + (n+1) H(+)(in) = a plastoquinol + NADP(+) + n H(+)(out). Functionally, NDH shuttles electrons from NAD(P)H:plastoquinone, via FMN and iron-sulfur (Fe-S) centers, to quinones in the photosynthetic chain and possibly in a chloroplast respiratory chain. The immediate electron acceptor for the enzyme in this species is believed to be plastoquinone. Couples the redox reaction to proton translocation, and thus conserves the redox energy in a proton gradient. This Amborella trichopoda protein is NAD(P)H-quinone oxidoreductase subunit H, chloroplastic.